The following is a 493-amino-acid chain: Glycerol kinase (493 aa).

Residue threonine 13 participates in ADP binding. Positions 13, 14, and 15 each coordinate ATP. Threonine 13 serves as a coordination point for sn-glycerol 3-phosphate. An ADP-binding site is contributed by arginine 17. Sn-glycerol 3-phosphate-binding residues include arginine 83, glutamate 84, tyrosine 135, and aspartate 244. Positions 83, 84, 135, 244, and 245 each coordinate glycerol. 2 residues coordinate ADP: threonine 266 and glycine 309. 4 residues coordinate ATP: threonine 266, glycine 309, glutamine 313, and glycine 410. 2 residues coordinate ADP: glycine 410 and asparagine 414.

It belongs to the FGGY kinase family.

The catalysed reaction is glycerol + ATP = sn-glycerol 3-phosphate + ADP + H(+). It functions in the pathway polyol metabolism; glycerol degradation via glycerol kinase pathway; sn-glycerol 3-phosphate from glycerol: step 1/1. Inhibited by fructose 1,6-bisphosphate (FBP). Key enzyme in the regulation of glycerol uptake and metabolism. Catalyzes the phosphorylation of glycerol to yield sn-glycerol 3-phosphate. This chain is Glycerol kinase, found in Shewanella piezotolerans (strain WP3 / JCM 13877).